The following is a 194-amino-acid chain: 7-methyl-GTP pyrophosphatase (194 aa).

The Proton acceptor role is filled by D70.

Belongs to the Maf family. YceF subfamily. A divalent metal cation is required as a cofactor.

Its subcellular location is the cytoplasm. The catalysed reaction is N(7)-methyl-GTP + H2O = N(7)-methyl-GMP + diphosphate + H(+). Its function is as follows. Nucleoside triphosphate pyrophosphatase that hydrolyzes 7-methyl-GTP (m(7)GTP). May have a dual role in cell division arrest and in preventing the incorporation of modified nucleotides into cellular nucleic acids. This is 7-methyl-GTP pyrophosphatase from Vibrio vulnificus (strain YJ016).